Reading from the N-terminus, the 371-residue chain is UPF0284 protein tll2306 (371 aa).

The protein belongs to the UPF0284 family.

This Thermosynechococcus vestitus (strain NIES-2133 / IAM M-273 / BP-1) protein is UPF0284 protein tll2306.